Here is a 262-residue protein sequence, read N- to C-terminus: MKVALKIAYDGTKFHGFQRQPNVRTVEGEIIKALNNSGIMFNELKSASRTDKGVSALGNVVAITTEDERITNPMILNAKLKDVWVLSAVKVPSDFHPRFWARSKVYRYYLPSFDLDVEKVKECSKLFLGVHDFSAFSRVDGRETVRSIDRIEVLDLGPVLAIEVEAKSFLWEMVRRIVKTLELCGLGKLSSEEVRKMLRGKFEKSRKVPPAPAEGLLLVEVKYKGIEFPIHDKALEKFRKDMEKRFREKIARAYLLWDMTKI.

Asp51 functions as the Nucleophile in the catalytic mechanism. Tyr106 lines the substrate pocket.

It belongs to the tRNA pseudouridine synthase TruA family.

It carries out the reaction uridine(38/39/40) in tRNA = pseudouridine(38/39/40) in tRNA. In terms of biological role, formation of pseudouridine at positions 38, 39 and 40 in the anticodon stem and loop of transfer RNAs. The polypeptide is tRNA pseudouridine synthase A (Pyrococcus horikoshii (strain ATCC 700860 / DSM 12428 / JCM 9974 / NBRC 100139 / OT-3)).